The following is a 287-amino-acid chain: Ribonuclease Z (287 aa).

Zn(2+)-binding residues include histidine 64, histidine 66, aspartate 68, histidine 69, histidine 124, aspartate 191, and histidine 250. Aspartate 68 acts as the Proton acceptor in catalysis.

Belongs to the RNase Z family. Homodimer. It depends on Zn(2+) as a cofactor.

The catalysed reaction is Endonucleolytic cleavage of RNA, removing extra 3' nucleotides from tRNA precursor, generating 3' termini of tRNAs. A 3'-hydroxy group is left at the tRNA terminus and a 5'-phosphoryl group is left at the trailer molecule.. Functionally, zinc phosphodiesterase, which displays some tRNA 3'-processing endonuclease activity. Probably involved in tRNA maturation, by removing a 3'-trailer from precursor tRNA. The chain is Ribonuclease Z from Pyrobaculum neutrophilum (strain DSM 2338 / JCM 9278 / NBRC 100436 / V24Sta) (Thermoproteus neutrophilus).